A 452-amino-acid chain; its full sequence is tRNA modification GTPase MnmE (452 aa).

(6S)-5-formyl-5,6,7,8-tetrahydrofolate-binding residues include Arg25, Glu82, and Arg125. Positions 221–374 constitute a TrmE-type G domain; sequence GLHVVLAGKP…LRARLLALAG (154 aa). K(+) is bound at residue Asn231. GTP contacts are provided by residues 231 to 236, 250 to 256, 275 to 278, and 355 to 357; these read NVGKSS, TPIAGTT, DTAG, and SAR. Residue Ser235 coordinates Mg(2+). K(+) contacts are provided by Thr250, Ile252, and Thr255. Residue Thr256 coordinates Mg(2+). Lys452 provides a ligand contact to (6S)-5-formyl-5,6,7,8-tetrahydrofolate.

Belongs to the TRAFAC class TrmE-Era-EngA-EngB-Septin-like GTPase superfamily. TrmE GTPase family. Homodimer. Heterotetramer of two MnmE and two MnmG subunits. K(+) is required as a cofactor.

It is found in the cytoplasm. Its function is as follows. Exhibits a very high intrinsic GTPase hydrolysis rate. Involved in the addition of a carboxymethylaminomethyl (cmnm) group at the wobble position (U34) of certain tRNAs, forming tRNA-cmnm(5)s(2)U34. The protein is tRNA modification GTPase MnmE of Bordetella petrii (strain ATCC BAA-461 / DSM 12804 / CCUG 43448).